We begin with the raw amino-acid sequence, 442 residues long: GTPase Der (442 aa).

EngA-type G domains lie at 3–167 and 177–350; these read PTIV…PPDV and PRIA…AAAM. Residues 9 to 16, 56 to 60, 119 to 122, 183 to 190, 230 to 234, and 295 to 298 each bind GTP; these read GRPNVGKS, DTAGF, NKSE, DTAGL, and NKWD. The KH-like domain occupies 351-435; the sequence is VNLSTPRLTR…PLRIQFRTAH (85 aa).

The protein belongs to the TRAFAC class TrmE-Era-EngA-EngB-Septin-like GTPase superfamily. EngA (Der) GTPase family. Associates with the 50S ribosomal subunit.

GTPase that plays an essential role in the late steps of ribosome biogenesis. In Aromatoleum aromaticum (strain DSM 19018 / LMG 30748 / EbN1) (Azoarcus sp. (strain EbN1)), this protein is GTPase Der.